Consider the following 222-residue polypeptide: MCPLRNLLLVATLVLLNHLDHLSLGRSLPATTAGPGMFKCLNHSQNLLKAVSNTLQKAKQTLEFYSCTSEEIDHEDITKDKTSTVEACLPLELATNESCLAARETSLITNGNCLTSGKTSFMTTLCLSSIYEDLKMYHVEFQAMNAKLLMDPKRQIFLDQNMLTAITELMQALNFNSETVPQKPSLEELDFYKTKIKLCILLHAFRIRAVTIDRMMSYLNSS.

A signal peptide spans 1 to 25; it reads MCPLRNLLLVATLVLLNHLDHLSLG. Disulfide bonds link Cys-40–Cys-113, Cys-67–Cys-199, and Cys-88–Cys-126. N-linked (GlcNAc...) asparagine glycans are attached at residues Asn-42 and Asn-96.

This sequence belongs to the IL-6 superfamily. Heterodimer with IL12B; disulfide-linked. This heterodimer is known as interleukin IL-12. Heterodimer with EBI3/IL27B; not disulfide-linked. This heterodimer is known as interleukin IL-35. Interacts with NBR1; this interaction promotes IL-12 secretion.

The protein localises to the secreted. Its function is as follows. Heterodimerizes with IL12B to form the IL-12 cytokine or with EBI3/IL27B to form the IL-35 cytokine. IL-12 is primarily produced by professional antigen-presenting cells (APCs) such as B-cells and dendritic cells (DCs) as well as macrophages and granulocytes and regulates T-cell and natural killer-cell responses, induces the production of interferon-gamma (IFN-gamma), favors the differentiation of T-helper 1 (Th1) cells and is an important link between innate resistance and adaptive immunity. Mechanistically, exerts its biological effects through a receptor composed of IL12R1 and IL12R2 subunits. Binding to the receptor results in the rapid tyrosine phosphorylation of a number of cellular substrates including the JAK family kinases TYK2 and JAK2. In turn, recruited STAT4 gets phosphorylated and translocates to the nucleus where it regulates cytokine/growth factor responsive genes. As part of IL-35, plays essential roles in maintaining the immune homeostasis of the liver microenvironment and also functions as an immune-suppressive cytokine. Mediates biological events through unconventional receptors composed of IL12RB2 and gp130/IL6ST heterodimers or homodimers. Signaling requires the transcription factors STAT1 and STAT4, which form a unique heterodimer that binds to distinct DNA sites. This Sus scrofa (Pig) protein is Interleukin-12 subunit alpha (IL12A).